The following is a 247-amino-acid chain: Uridylate kinase (247 aa).

15–18 (KLSG) is a binding site for ATP. The interval 23 to 28 (GEEGFG) is involved in allosteric activation by GTP. Gly-57 is a UMP binding site. 2 residues coordinate ATP: Gly-58 and Arg-62. Residues Asp-77 and 138–145 (TGNPFFTT) contribute to the UMP site. The ATP site is built by Thr-165, Tyr-171, and Asp-174.

Belongs to the UMP kinase family. In terms of assembly, homohexamer.

It is found in the cytoplasm. It carries out the reaction UMP + ATP = UDP + ADP. It functions in the pathway pyrimidine metabolism; CTP biosynthesis via de novo pathway; UDP from UMP (UMPK route): step 1/1. Allosterically activated by GTP. Inhibited by UTP. Its function is as follows. Catalyzes the reversible phosphorylation of UMP to UDP. This is Uridylate kinase from Pseudoalteromonas atlantica (strain T6c / ATCC BAA-1087).